The sequence spans 225 residues: Enolase-phosphatase E1 (225 aa).

The protein belongs to the HAD-like hydrolase superfamily. MasA/MtnC family. As to quaternary structure, monomer. It depends on Mg(2+) as a cofactor.

It catalyses the reaction 5-methylsulfanyl-2,3-dioxopentyl phosphate + H2O = 1,2-dihydroxy-5-(methylsulfanyl)pent-1-en-3-one + phosphate. It participates in amino-acid biosynthesis; L-methionine biosynthesis via salvage pathway; L-methionine from S-methyl-5-thio-alpha-D-ribose 1-phosphate: step 3/6. The protein operates within amino-acid biosynthesis; L-methionine biosynthesis via salvage pathway; L-methionine from S-methyl-5-thio-alpha-D-ribose 1-phosphate: step 4/6. Its function is as follows. Bifunctional enzyme that catalyzes the enolization of 2,3-diketo-5-methylthiopentyl-1-phosphate (DK-MTP-1-P) into the intermediate 2-hydroxy-3-keto-5-methylthiopentenyl-1-phosphate (HK-MTPenyl-1-P), which is then dephosphorylated to form the acireductone 1,2-dihydroxy-3-keto-5-methylthiopentene (DHK-MTPene). The chain is Enolase-phosphatase E1 from Shewanella denitrificans (strain OS217 / ATCC BAA-1090 / DSM 15013).